The following is a 446-amino-acid chain: Dihydroorotate dehydrogenase (quinone), mitochondrial (446 aa).

The N-terminal 13 residues, 1–13 (MHSRPLPTLGRHA), are a transit peptide targeting the mitochondrion. A helical transmembrane segment spans residues 40–57 (AILYTAGILGGAFAGYYL). Residues 125–129 (AGLDK) and Ser-149 contribute to the FMN site. Lys-129 provides a ligand contact to substrate. Substrate is bound at residue 174-178 (NRYGF). Residues Asn-222 and Asn-252 each contribute to the FMN site. Substrate-binding positions include Asn-252 and 252 to 257 (NVSSPN). Ser-255 serves as the catalytic Nucleophile. Lys-303 and Ser-331 together coordinate FMN. 332–333 (NT) provides a ligand contact to substrate. Residues Gly-357, Gly-387, and 408 to 409 (YT) contribute to the FMN site.

Belongs to the dihydroorotate dehydrogenase family. Type 2 subfamily. The cofactor is FMN.

The protein localises to the mitochondrion inner membrane. It catalyses the reaction (S)-dihydroorotate + a quinone = orotate + a quinol. Its pathway is pyrimidine metabolism; UMP biosynthesis via de novo pathway; orotate from (S)-dihydroorotate (quinone route): step 1/1. With respect to regulation, the activity is dependent of the presence of oxygen. Catalyzes the conversion of dihydroorotate to orotate with quinone as electron acceptor. This is Dihydroorotate dehydrogenase (quinone), mitochondrial (URA9) from Lachancea kluyveri (strain ATCC 58438 / CBS 3082 / BCRC 21498 / NBRC 1685 / JCM 7257 / NCYC 543 / NRRL Y-12651) (Yeast).